The chain runs to 339 residues: Deoxyhypusine hydroxylase (339 aa).

HEAT-like PBS-type repeat units lie at residues 71 to 97 (LKHELAYCLGQTRNPDAVSYLLEVVKN) and 104 to 130 (CRHEAAEGLGALGFDTSLDVLKALRDD). Residues H73, E74, H106, and E107 each coordinate Fe cation. Residues 159-183 (EKLKPSDFTSIDPAPPLPMASSQPS) form a disordered region. HEAT-like PBS-type repeat units follow at residues 200–233 (QRYRAMFALRDLASPPDLPTAVEAVEALAKGLKD), 238–264 (FRHEVAFVFGQLCHPASVPSLTETLSD), and 271–298 (VRHEAAEALGSLGDVEGVEDTLKKFLND). H240, E241, H273, and E274 together coordinate Fe cation.

Belongs to the deoxyhypusine hydroxylase family. It depends on Fe(2+) as a cofactor.

The protein localises to the cytoplasm. The protein resides in the nucleus. It catalyses the reaction [eIF5A protein]-deoxyhypusine + AH2 + O2 = [eIF5A protein]-hypusine + A + H2O. It functions in the pathway protein modification; eIF5A hypusination. Functionally, catalyzes the hydroxylation of the N(6)-(4-aminobutyl)-L-lysine intermediate to form hypusine, an essential post-translational modification only found in mature eIF-5A factor. In Aspergillus oryzae (strain ATCC 42149 / RIB 40) (Yellow koji mold), this protein is Deoxyhypusine hydroxylase (lia1).